Here is a 695-residue protein sequence, read N- to C-terminus: DNA ligase (695 aa).

Residue 30 to 34 (DADFD) coordinates NAD(+). Residues 52 to 71 (TGASPTEEVAPAPPTSSPFR) form a disordered region. Residues 81–82 (SL) and glutamate 106 each bind NAD(+). The active-site N6-AMP-lysine intermediate is lysine 108. NAD(+) is bound by residues arginine 129, glutamate 169, lysine 285, and lysine 309. Zn(2+) contacts are provided by cysteine 403, cysteine 406, cysteine 422, and cysteine 428. The BRCT domain occupies 599–688 (VDSALLEGLT…APSSGDDAST (90 aa)). A disordered region spans residues 676–695 (ENGAPSSGDDASTSADSVDD). Residues 679 to 695 (APSSGDDASTSADSVDD) are compositionally biased toward low complexity.

Belongs to the NAD-dependent DNA ligase family. LigA subfamily. Requires Mg(2+) as cofactor. The cofactor is Mn(2+).

The enzyme catalyses NAD(+) + (deoxyribonucleotide)n-3'-hydroxyl + 5'-phospho-(deoxyribonucleotide)m = (deoxyribonucleotide)n+m + AMP + beta-nicotinamide D-nucleotide.. Its function is as follows. DNA ligase that catalyzes the formation of phosphodiester linkages between 5'-phosphoryl and 3'-hydroxyl groups in double-stranded DNA using NAD as a coenzyme and as the energy source for the reaction. It is essential for DNA replication and repair of damaged DNA. The polypeptide is DNA ligase (Corynebacterium jeikeium (strain K411)).